Consider the following 46-residue polypeptide: MKRYKRMKSVVEFCLENEKTQHKNVIQIRCIDGVSFFNLYSYNLLT.

This is an uncharacterized protein from Dictyostelium discoideum (Social amoeba).